The following is a 361-amino-acid chain: Ribosomal RNA large subunit methyltransferase M (361 aa).

S-adenosyl-L-methionine is bound by residues serine 187, 220–223, aspartate 239, aspartate 259, and aspartate 276; that span reads CPGG. Lysine 305 serves as the catalytic Proton acceptor.

This sequence belongs to the class I-like SAM-binding methyltransferase superfamily. RNA methyltransferase RlmE family. RlmM subfamily. In terms of assembly, monomer.

Its subcellular location is the cytoplasm. The enzyme catalyses cytidine(2498) in 23S rRNA + S-adenosyl-L-methionine = 2'-O-methylcytidine(2498) in 23S rRNA + S-adenosyl-L-homocysteine + H(+). Catalyzes the 2'-O-methylation at nucleotide C2498 in 23S rRNA. The protein is Ribosomal RNA large subunit methyltransferase M of Shewanella oneidensis (strain ATCC 700550 / JCM 31522 / CIP 106686 / LMG 19005 / NCIMB 14063 / MR-1).